We begin with the raw amino-acid sequence, 561 residues long: Glucose-6-phosphate isomerase (561 aa).

Residues 171–172, 222–227, Gln366, Glu370, His401, and Lys525 each bind D-glucose 6-phosphate; these read GS and SKTFTT. The active-site Proton donor is the Glu370. Active-site residues include His401 and Lys525.

Belongs to the GPI family. As to quaternary structure, homodimer.

Its subcellular location is the cytoplasm. It localises to the cytosol. It catalyses the reaction alpha-D-glucose 6-phosphate = beta-D-fructose 6-phosphate. Its pathway is carbohydrate degradation; glycolysis; D-glyceraldehyde 3-phosphate and glycerone phosphate from D-glucose: step 2/4. Its function is as follows. In the cytoplasm, catalyzes the conversion of glucose-6-phosphate to fructose-6-phosphate, the second step in glycolysis, and the reverse reaction during gluconeogenesis. The protein is Glucose-6-phosphate isomerase (pgi-1) of Neurospora crassa (strain ATCC 24698 / 74-OR23-1A / CBS 708.71 / DSM 1257 / FGSC 987).